Reading from the N-terminus, the 181-residue chain is MFVSRLAASGLLLLALLAVSLDGKPLQQWSQRWPHLEIPPLVVQNWKSPTQLQARESPAGGTTALREELSLGPEAALDTPPAGPDGGPRGSKAAAAAPQRLSKSKGASATSAASRDLRTDGKQARQNWGRLVSPDHHSAAGGGCGGGGGARRLKGLAKKRAGNGCFGLKLDRIGSMSGLGC.

An N-terminal signal peptide occupies residues 1–23 (MFVSRLAASGLLLLALLAVSLDG). The propeptide occupies 24 to 27 (KPLQ). 2 positions are modified to pyrrolidone carboxylic acid: Q28 and Q31. Residues 41 to 43 (LVV) constitute a propeptide that is removed on maturation. Q44 is subject to Pyrrolidone carboxylic acid. Residues 50–52 (TQL) constitute a propeptide that is removed on maturation. At Q53 the chain carries Pyrrolidone carboxylic acid. The propeptide occupies 59 to 159 (AGGTTALREE…ARRLKGLAKK (101 aa)). The tract at residues 74–150 (EAALDTPPAG…GGGCGGGGGA (77 aa)) is disordered. The span at 104–114 (SKGASATSAAS) shows a compositional bias: low complexity. Over residues 140 to 150 (AGGGCGGGGGA) the composition is skewed to gly residues. C165 and C181 are oxidised to a cystine.

The protein in the N-terminal section; belongs to the bradykinin-potentiating peptide family. In the C-terminal section; belongs to the natriuretic peptide family. Venom gland.

It localises to the secreted. Functionally, bradykinin-potentiating peptide both inhibits the activity of the angiotensin-converting enzyme (ACE) and enhances the action of bradykinin by inhibiting the peptidases that inactivate it. It acts as an indirect hypotensive agent. Synthetic Cdt1a, Cdt1b and the short hexapeptide Cdt3 are able to potentiate the hypotensive effect mediated by Bk on the blood pressure of anesthetized rats. In terms of biological role, has a vasorelaxant activity in rat aortic strips and a diuretic potency in anesthetized rats. May act by activating natriuretic receptors (NPR1 and/or NPR2). This chain is Bradykinin potentiating and C-type natriuretic peptides, found in Crotalus durissus terrificus (South American rattlesnake).